A 158-amino-acid polypeptide reads, in one-letter code: MTSSSPSPQASMLLYWHENQYDDRNFQIHGRTLFFALALFSVVLFFALLTLYIHRNCLPRDSINLHASSPDRLTRCRSGGLDPAEIRSLPVVLCRRERAEEEEEKECCICLGGFEEGEKMKVLPPCSHCYHCECVDRWLKTESSCPLCRVSIRVDSSS.

The helical transmembrane segment at 33-53 (LFFALALFSVVLFFALLTLYI) threads the bilayer. The segment at 107 to 149 (CCICLGGFEEGEKMKVLPPCSHCYHCECVDRWLKTESSCPLCR) adopts an RING-type; atypical zinc-finger fold.

This sequence belongs to the RING-type zinc finger family. ATL subfamily.

The protein localises to the membrane. It carries out the reaction S-ubiquitinyl-[E2 ubiquitin-conjugating enzyme]-L-cysteine + [acceptor protein]-L-lysine = [E2 ubiquitin-conjugating enzyme]-L-cysteine + N(6)-ubiquitinyl-[acceptor protein]-L-lysine.. It participates in protein modification; protein ubiquitination. The sequence is that of RING-H2 finger protein ATL66 (ATL66) from Arabidopsis thaliana (Mouse-ear cress).